The primary structure comprises 553 residues: Phosphoglucomutase (553 aa).

The segment at 1–24 (MQATVKRYPTTPISGQTMGTSGLR) is disordered. Positions 11–20 (TPISGQTMGT) are enriched in polar residues. Residues Thr-20, Arg-24, 117 to 118 (SH), and Lys-131 each bind substrate. Residue Ser-117 is the Phosphoserine intermediate of the active site. Ser-117 contributes to the Mg(2+) binding site. Mg(2+)-binding residues include Asp-289, Asp-291, and Asp-293. Residues 293-294 (DR), Thr-352, 371-373 (EES), Lys-384, and Arg-509 contribute to the substrate site.

Belongs to the phosphohexose mutase family. It depends on Mg(2+) as a cofactor.

The protein localises to the cytoplasm. It catalyses the reaction alpha-D-glucose 1-phosphate = alpha-D-glucose 6-phosphate. Functionally, this enzyme participates in both the breakdown and synthesis of glucose. This is Phosphoglucomutase (pgm) from Entamoeba dispar.